Here is a 732-residue protein sequence, read N- to C-terminus: Ionotropic receptor 40a (732 aa).

The signal sequence occupies residues 1–19 (MHKFLALGLLPYLLGLLNS). Residues asparagine 18, asparagine 235, and asparagine 299 are each glycosylated (N-linked (GlcNAc...) asparagine). Residues 20-369 (TRLTFIGNDE…RPFKQDIWPH (350 aa)) lie on the Extracellular side of the membrane. The chain crosses the membrane as a helical span at residues 370–390 (LILTIIFSGPIFYGIIALPYI). Residues 391-465 (WRRRWANSDV…NELHNGYRAK (75 aa)) are Cytoplasmic-facing. Residues 466–486 (FLTIVYWIAATYVLADVYSAQ) traverse the membrane as a helical segment. The Extracellular portion of the chain corresponds to 487–688 (LTSQFARPAR…LNLRMLQGAF (202 aa)). The N-linked (GlcNAc...) asparagine glycan is linked to asparagine 531. Residues 689 to 709 (IALGVGSLAAGVILLLEIVFI) traverse the membrane as a helical segment. Over 710 to 732 (KLDQARLWMLCSRLQWIRYDRKV) the chain is Cytoplasmic.

Belongs to the glutamate-gated ion channel (TC 1.A.10.1) family. As to expression, in the antenna, detected in sacculus neurons which innervate the first and second chambers (at protein level).

It localises to the cell membrane. Functionally, integral part of a neural sensory system in the antenna that provides the neural basis for the response to environmental changes in humidity (hygrosensation). Together with Ir25a and Ir93a, mediates the response of the hygrosensory sacculus neurons to changes in relative humidity and is required for dry detection behavior. The polypeptide is Ionotropic receptor 40a (Drosophila melanogaster (Fruit fly)).